A 477-amino-acid chain; its full sequence is Otoconin-90 (477 aa).

The first 17 residues, Met1–Gly17, serve as a signal peptide directing secretion. Asn38 carries an N-linked (GlcNAc...) asparagine glycan. Phospholipase A2-like stretches follow at residues Leu76–Cys190, Met305–Cys361, and Cys373–Cys425. 7 cysteine pairs are disulfide-bonded: Cys85/Cys145, Cys99/Cys190, Cys101/Cys117, Cys116/Cys172, Cys123/Cys165, Cys132/Cys158, and Cys152/Cys163. Residue Asn179 is glycosylated (N-linked (GlcNAc...) asparagine). Asn407 carries an N-linked (GlcNAc...) asparagine glycan. Residues Ser428–Arg477 form a disordered region. Over residues Ser442 to Gln452 the composition is skewed to acidic residues.

Belongs to the phospholipase A2 family. In terms of assembly, interacts with OTOL1.

It is found in the secreted. Its function is as follows. Major protein of the otoconia, a calcium carbonate structure in the saccule and utricle of the ear. Together with OTOL1, acts as a scaffold for otoconia biomineralization: sequesters calcium and forms interconnecting fibrils between otoconia that are incorporated into the calcium crystal structure. Together with OTOL1, modulates calcite crystal morphology and growth kinetics. It is unlikely that this protein has phospholipase A2 activity. The sequence is that of Otoconin-90 from Homo sapiens (Human).